The primary structure comprises 412 residues: Major facilitator superfamily domain-containing protein 3 (412 aa).

Helical transmembrane passes span 10–30 (GLYL…PILL), 40–60 (VGLT…APLV), 68–88 (VWLT…AVLP), 99–119 (TTVM…DVAL), 152–172 (GGLL…LLAA), 173–193 (TYWL…LPWP), 204–224 (YLLQ…FVLT), 252–272 (LWSG…GGAL), 291–311 (LGSL…GASV), 320–340 (AVLL…TATF), 361–381 (FLAT…GVLA), and 384–404 (LGPH…VLDL).

The protein belongs to the major facilitator superfamily. In terms of tissue distribution, in brain, expressed in the cortex, striatum, hippocampus, hypothalamus, thalamus and cerebellum (at protein level). Widely expressed with highest levels in kidney and liver.

Its subcellular location is the membrane. The polypeptide is Major facilitator superfamily domain-containing protein 3 (Mfsd3) (Mus musculus (Mouse)).